The sequence spans 24 residues: Coenzyme PQQ synthesis protein A (24 aa).

The segment at residues 16-20 (EITMY) is a cross-link (pyrroloquinoline quinone (Glu-Tyr)).

This sequence belongs to the PqqA family.

Its pathway is cofactor biosynthesis; pyrroloquinoline quinone biosynthesis. Required for coenzyme pyrroloquinoline quinone (PQQ) biosynthesis. PQQ is probably formed by cross-linking a specific glutamate to a specific tyrosine residue and excising these residues from the peptide. In Cupriavidus taiwanensis (strain DSM 17343 / BCRC 17206 / CCUG 44338 / CIP 107171 / LMG 19424 / R1) (Ralstonia taiwanensis (strain LMG 19424)), this protein is Coenzyme PQQ synthesis protein A.